The following is a 150-amino-acid chain: Ribonuclease H (150 aa).

The 142-residue stretch at Glu-7–Glu-148 folds into the RNase H type-1 domain. Residues Asp-16, Glu-54, Asp-76, and Asp-140 each contribute to the Mg(2+) site.

The protein belongs to the RNase H family. In terms of assembly, monomer. Mg(2+) serves as cofactor.

It localises to the cytoplasm. The enzyme catalyses Endonucleolytic cleavage to 5'-phosphomonoester.. Its function is as follows. Endonuclease that specifically degrades the RNA of RNA-DNA hybrids. The polypeptide is Ribonuclease H (Gluconobacter oxydans (strain 621H) (Gluconobacter suboxydans)).